The sequence spans 472 residues: 3-isopropylmalate dehydratase large subunit (472 aa).

[4Fe-4S] cluster-binding residues include Cys-353, Cys-414, and Cys-417.

The protein belongs to the aconitase/IPM isomerase family. LeuC type 1 subfamily. Heterodimer of LeuC and LeuD. [4Fe-4S] cluster is required as a cofactor.

The enzyme catalyses (2R,3S)-3-isopropylmalate = (2S)-2-isopropylmalate. It functions in the pathway amino-acid biosynthesis; L-leucine biosynthesis; L-leucine from 3-methyl-2-oxobutanoate: step 2/4. Its function is as follows. Catalyzes the isomerization between 2-isopropylmalate and 3-isopropylmalate, via the formation of 2-isopropylmaleate. The protein is 3-isopropylmalate dehydratase large subunit of Acinetobacter baumannii (strain ACICU).